The primary structure comprises 244 residues: tRNA pseudouridine synthase B (244 aa).

Asp46 (nucleophile) is an active-site residue.

Belongs to the pseudouridine synthase TruB family. Type 1 subfamily.

The catalysed reaction is uridine(55) in tRNA = pseudouridine(55) in tRNA. Functionally, responsible for synthesis of pseudouridine from uracil-55 in the psi GC loop of transfer RNAs. The protein is tRNA pseudouridine synthase B of Bordetella bronchiseptica (strain ATCC BAA-588 / NCTC 13252 / RB50) (Alcaligenes bronchisepticus).